The sequence spans 117 residues: Ig heavy chain V region MOPC 173 (117 aa).

The region spanning 1-116 (EVKLLESGGP…WGQGTSVTVS (116 aa)) is the Ig-like domain. An intrachain disulfide couples cysteine 22 to cysteine 96.

This Mus musculus (Mouse) protein is Ig heavy chain V region MOPC 173.